Here is a 447-residue protein sequence, read N- to C-terminus: Pyruvate kinase (447 aa).

Residue Arg-33 coordinates substrate. Residues Asn-35, Ser-37, and Asp-61 each coordinate K(+). 35–38 (NMSH) is a binding site for ATP. Position 68 (Arg-68) interacts with ATP. Glu-203 is a binding site for Mg(2+). Substrate contacts are provided by Gly-226, Asp-227, and Thr-259. A Mg(2+)-binding site is contributed by Asp-227.

It belongs to the pyruvate kinase family. In terms of assembly, homotetramer. Mg(2+) is required as a cofactor. It depends on K(+) as a cofactor.

The enzyme catalyses pyruvate + ATP = phosphoenolpyruvate + ADP + H(+). It participates in carbohydrate degradation; glycolysis; pyruvate from D-glyceraldehyde 3-phosphate: step 5/5. The protein is Pyruvate kinase of Methanocaldococcus jannaschii (strain ATCC 43067 / DSM 2661 / JAL-1 / JCM 10045 / NBRC 100440) (Methanococcus jannaschii).